The chain runs to 149 residues: MKLTDYVKQVSLEDFGRPFIHHVQWNRRLRSTGGRFFPKDGHLDFNPKVYQKLGMEVFRKIVRHELCHYHLYFQGKGYQHKDRDFKELLKAVDGLRFVPSLPNSNSKPLKLYRCQSCQQRYQRKRRIDTKRYRCGLCRGKLLLINQPED.

Positions 4 to 143 (TDYVKQVSLE…CGLCRGKLLL (140 aa)) constitute a SprT-like domain. H64 lines the Zn(2+) pocket. E65 is a catalytic residue. H68 is a Zn(2+) binding site.

Belongs to the SprT family. Zn(2+) serves as cofactor.

The protein localises to the cytoplasm. This is Protein SprT-like from Streptococcus pneumoniae (strain Taiwan19F-14).